The chain runs to 446 residues: tRNA modification GTPase MnmE (446 aa).

3 residues coordinate (6S)-5-formyl-5,6,7,8-tetrahydrofolate: arginine 22, glutamate 80, and lysine 119. One can recognise a TrmE-type G domain in the interval 215–370; that stretch reads GLSLVIAGRP…LKKVIKQVVG (156 aa). K(+) is bound at residue asparagine 225. GTP is bound by residues 225–230, 244–250, and 269–272; these read NAGKST, TEIAGTT, and DTAG. Residue serine 229 coordinates Mg(2+). Residues threonine 244, isoleucine 246, and threonine 249 each coordinate K(+). Threonine 250 is a Mg(2+) binding site. Lysine 446 contacts (6S)-5-formyl-5,6,7,8-tetrahydrofolate.

This sequence belongs to the TRAFAC class TrmE-Era-EngA-EngB-Septin-like GTPase superfamily. TrmE GTPase family. As to quaternary structure, homodimer. Heterotetramer of two MnmE and two MnmG subunits. Requires K(+) as cofactor.

Its subcellular location is the cytoplasm. In terms of biological role, exhibits a very high intrinsic GTPase hydrolysis rate. Involved in the addition of a carboxymethylaminomethyl (cmnm) group at the wobble position (U34) of certain tRNAs, forming tRNA-cmnm(5)s(2)U34. In Legionella pneumophila (strain Paris), this protein is tRNA modification GTPase MnmE.